Here is a 592-residue protein sequence, read N- to C-terminus: Sodium- and chloride-dependent transporter XTRP3 (592 aa).

At 1-5 (MEKAR) the chain is on the cytoplasmic side. A helical membrane pass occupies residues 6–26 (PLWANSLQFVFACISYAVGLG). At 27–42 (NVWRFPYLCQMYGGGS) the chain is on the extracellular side. A helical transmembrane segment spans residues 43 to 63 (FLVPYIIMLIVEGMPLLYLEL). The Cytoplasmic segment spans residues 64 to 79 (AVGQRMRQGSIGAWRT). Residues 80 to 100 (ISPYLSGVGVASVVVSFFLSM) form a helical membrane-spanning segment. Topologically, residues 101 to 165 (YYNVINAWAF…ISPSLQENGG (65 aa)) are extracellular. N-linked (GlcNAc...) asparagine glycosylation is present at Asn131. A helical transmembrane segment spans residues 166 to 186 (VQWEPALCLLLAWLVVYLCIL). The Cytoplasmic portion of the chain corresponds to 187–194 (RGTESTGK). A helical membrane pass occupies residues 195–215 (VVYFTASLPYCVLIIYLIRGL). Topologically, residues 216–241 (TLHGATNGLMYMFTPKIEQLANPKAW) are extracellular. A helical transmembrane segment spans residues 242 to 262 (INAATQIFFSLGLGFGSLIAF). The Cytoplasmic portion of the chain corresponds to 263–276 (ASYNEPSNNCQKHA). Residues 277-297 (IIVSLINSFTSIFASIVTFSI) traverse the membrane as a helical segment. The Extracellular segment spans residues 298–389 (YGFKATFNYE…EAIKNMEVSQ (92 aa)). Residue Asn357 is glycosylated (N-linked (GlcNAc...) asparagine). Residues 390–410 (LWSVLYFFMLLMLGIGSMLGN) traverse the membrane as a helical segment. The Cytoplasmic segment spans residues 411–431 (TAAILTPLTDSKIISSHLPKE). Residues 432-452 (AISGLVCLVNCAIGMVFTMEA) form a helical membrane-spanning segment. Over 453 to 465 (GNYWFDIFNDYAA) the chain is Extracellular. A helical membrane pass occupies residues 466 to 486 (TLSLLLIVLVETIAVCYVYGL). The Cytoplasmic segment spans residues 487 to 504 (RRFESDLKAMTGRAVSWY). A helical membrane pass occupies residues 505 to 525 (WKVMWAGVSPLLIVSLFVFYL). The Extracellular segment spans residues 526–554 (SDYILTGTLKYQAWDASQGQLVTKDYPAY). A helical transmembrane segment spans residues 555–575 (ALAVIGLLVASSTMCIPLAAL). The Cytoplasmic segment spans residues 576 to 592 (GTFVQRRLKRGDADPVA).

Belongs to the sodium:neurotransmitter symporter (SNF) (TC 2.A.22) family. SLC6A20 subfamily. In terms of tissue distribution, kidney and small intestine. Expressed in the S3 segment of the proximal tubule. Expressed in neurons.

The protein localises to the apical cell membrane. It carries out the reaction L-proline(out) + chloride(out) + 2 Na(+)(out) = L-proline(in) + chloride(in) + 2 Na(+)(in). The enzyme catalyses L-pipecolate(out) + chloride(out) + 2 Na(+)(out) = L-pipecolate(in) + chloride(in) + 2 Na(+)(in). It catalyses the reaction sarcosine(out) + chloride(out) + 2 Na(+)(out) = sarcosine(in) + chloride(in) + 2 Na(+)(in). The catalysed reaction is N-methyl-L-proline(out) + chloride(out) + 2 Na(+)(out) = N-methyl-L-proline(in) + chloride(in) + 2 Na(+)(in). It carries out the reaction 2-methyl-2-(methylamino)propanoate(out) + chloride(out) + 2 Na(+)(out) = 2-methyl-2-(methylamino)propanoate(in) + chloride(in) + 2 Na(+)(in). The enzyme catalyses glycine betaine(out) + chloride(out) + 2 Na(+)(out) = glycine betaine(in) + chloride(in) + 2 Na(+)(in). It catalyses the reaction glycine(out) + chloride(out) + 2 Na(+)(out) = glycine(in) + chloride(in) + 2 Na(+)(in). Mediates the Na(+)- and Cl(-)-dependent uptake of imino acids such as L-proline, N-methyl-L-proline and pipecolate as well as N-methylated amino acids. Also transports glycine, regulates proline and glycine homeostasis in the brain playing a role in the modulation of NMDAR currents. This chain is Sodium- and chloride-dependent transporter XTRP3, found in Homo sapiens (Human).